The sequence spans 329 residues: Biotin synthase (329 aa).

The Radical SAM core domain occupies 38–262 (NTIQVSTLLS…IMPHSYIRLS (225 aa)). [4Fe-4S] cluster contacts are provided by Cys53, Cys57, and Cys60. The [2Fe-2S] cluster site is built by Cys97, Cys128, Cys188, and Arg260.

Belongs to the radical SAM superfamily. Biotin synthase family. In terms of assembly, homodimer. Requires [4Fe-4S] cluster as cofactor. The cofactor is [2Fe-2S] cluster.

It carries out the reaction (4R,5S)-dethiobiotin + (sulfur carrier)-SH + 2 reduced [2Fe-2S]-[ferredoxin] + 2 S-adenosyl-L-methionine = (sulfur carrier)-H + biotin + 2 5'-deoxyadenosine + 2 L-methionine + 2 oxidized [2Fe-2S]-[ferredoxin]. Its pathway is cofactor biosynthesis; biotin biosynthesis; biotin from 7,8-diaminononanoate: step 2/2. In terms of biological role, catalyzes the conversion of dethiobiotin (DTB) to biotin by the insertion of a sulfur atom into dethiobiotin via a radical-based mechanism. This chain is Biotin synthase, found in Acinetobacter baumannii (strain ACICU).